We begin with the raw amino-acid sequence, 256 residues long: Calsenilin (256 aa).

The segment at 1-30 is disordered; sequence MQRAKEVMKVSDGSLLGEPGRTPLSKKEGV. Serine 14 carries the post-translational modification Phosphoserine. Lysine 26 participates in a covalent cross-link: Glycyl lysine isopeptide (Lys-Gly) (interchain with G-Cter in SUMO1). 2 S-palmitoyl cysteine lipidation sites follow: cysteine 45 and cysteine 46. Phosphoserine occurs at positions 60 and 63. The EF-hand 1; degenerate domain maps to 67–123; that stretch reads LELSAVRHQPEGLDQLQAQTKFTKKELQSLYRGFKNECPTGLVDEDTFKLIYSQFFP. Residue lysine 90 forms a Glycyl lysine isopeptide (Lys-Gly) (interchain with G-Cter in SUMO1) linkage. 3 EF-hand domains span residues 126 to 161, 162 to 197, and 210 to 245; these read DATTYAHFLFNAFDADGNGAIRFEDFVVGLSILLRG, TVHEKLKWAFNLYDINKDGYITKEEMLAIMKSIYDM, and APLEHVERFFQKMDRNQDGVVTIDEFLETCQKDENI. Residues aspartate 175, asparagine 177, aspartate 179, tyrosine 181, glutamate 186, aspartate 223, asparagine 225, aspartate 227, and glutamate 234 each contribute to the Ca(2+) site. An interaction with KCND2 region spans residues 243–256; that stretch reads ENIMSSMQLFENVI.

This sequence belongs to the recoverin family. Binds to DNA as a homomultimer. Dimerization is induced by binding to calcium. Interacts with the C-terminus of PSEN1 and PSEN2 and with PSEN2 CTF subunit. Associates with KCN1. Component of heteromultimeric potassium channels. Identified in potassium channel complexes containing KCND1, KCND2, KCND3, KCNIP1, KCNIP2, KCNIP3, KCNIP4, DPP6 and DPP10. Interacts with KCND2 and KCND3. Palmitoylated. Palmitoylation enhances association with the plasma membrane. In terms of processing, proteolytically cleaved by caspase-3.

It localises to the cytoplasm. The protein localises to the cell membrane. Its subcellular location is the endoplasmic reticulum. The protein resides in the golgi apparatus. It is found in the nucleus. Functionally, regulatory subunit of Kv4/D (Shal)-type voltage-gated rapidly inactivating A-type potassium channels, such as KCND2/Kv4.2 and KCND3/Kv4.3. Modulates channel expression at the cell membrane, gating characteristics, inactivation kinetics and rate of recovery from inactivation in a calcium-dependent and isoform-specific manner. Its function is as follows. May play a role in the regulation of PSEN2 proteolytic processing and apoptosis. Together with PSEN2 involved in modulation of amyloid-beta formation. Calcium-dependent transcriptional repressor that binds to the DRE element of genes including PDYN and FOS. Affinity for DNA is reduced upon binding to calcium and enhanced by binding to magnesium. Seems to be involved in nociception. This chain is Calsenilin (KCNIP3), found in Bos taurus (Bovine).